Here is a 151-residue protein sequence, read N- to C-terminus: UPF0178 protein PFLU_5917 (151 aa).

Belongs to the UPF0178 family.

The sequence is that of UPF0178 protein PFLU_5917 from Pseudomonas fluorescens (strain SBW25).